Here is a 356-residue protein sequence, read N- to C-terminus: tRNA-specific 2-thiouridylase MnmA (356 aa).

ATP is bound by residues 6–13 and Leu-32; that span reads GMSGGVDS. Cys-102 serves as the catalytic Nucleophile. An intrachain disulfide couples Cys-102 to Cys-200. Residue Gly-127 coordinates ATP. Residues 150 to 152 are interaction with tRNA; that stretch reads RDQ. The active-site Cysteine persulfide intermediate is the Cys-200. An interaction with tRNA region spans residues 302–303; that stretch reads RY.

The protein belongs to the MnmA/TRMU family.

It localises to the cytoplasm. It carries out the reaction S-sulfanyl-L-cysteinyl-[protein] + uridine(34) in tRNA + AH2 + ATP = 2-thiouridine(34) in tRNA + L-cysteinyl-[protein] + A + AMP + diphosphate + H(+). Its function is as follows. Catalyzes the 2-thiolation of uridine at the wobble position (U34) of tRNA, leading to the formation of s(2)U34. This chain is tRNA-specific 2-thiouridylase MnmA, found in Aquifex aeolicus (strain VF5).